Consider the following 89-residue polypeptide: Small ribosomal subunit protein uS15 (89 aa).

This sequence belongs to the universal ribosomal protein uS15 family. In terms of assembly, part of the 30S ribosomal subunit. Forms a bridge to the 50S subunit in the 70S ribosome, contacting the 23S rRNA.

Functionally, one of the primary rRNA binding proteins, it binds directly to 16S rRNA where it helps nucleate assembly of the platform of the 30S subunit by binding and bridging several RNA helices of the 16S rRNA. Forms an intersubunit bridge (bridge B4) with the 23S rRNA of the 50S subunit in the ribosome. This is Small ribosomal subunit protein uS15 from Streptococcus pneumoniae (strain P1031).